Reading from the N-terminus, the 207-residue chain is BTB/POZ domain-containing protein At1g01640 (207 aa).

The BTB domain occupies 24 to 94; that stretch reads TDVLVKPGEE…LYSGNLKAPY (71 aa).

As to quaternary structure, interacts with CUL3A.

The protein operates within protein modification; protein ubiquitination. In terms of biological role, may act as a substrate-specific adapter of an E3 ubiquitin-protein ligase complex (CUL3-RBX1-BTB) which mediates the ubiquitination and subsequent proteasomal degradation of target proteins. This chain is BTB/POZ domain-containing protein At1g01640, found in Arabidopsis thaliana (Mouse-ear cress).